The following is a 968-amino-acid chain: Dynein axonemal intermediate chain 3 (968 aa).

Basic and acidic residues predominate over residues 1–33 (MKDTSSKRPKSKEANKKKTKDKSNADNLPKPEE). Disordered regions lie at residues 1–39 (MKDT…ASEP) and 136–166 (KPPA…PEPQ). Positions 141 to 157 (GADEQMEDEEQQEEEEE) are enriched in acidic residues. WD repeat units lie at residues 407-447 (ECPD…DRLQ), 480-536 (GHKA…VMVH), and 712-753 (VYSK…RQPS). Residues 830–857 (LHTHTDQLRVLEERVREAKQNLLAVSDR) are a coiled coil. Over residues 897–919 (KRQSDHQKKKKETEAEQQKKKTE) the composition is skewed to basic and acidic residues. Positions 897–930 (KRQSDHQKKKKETEAEQQKKKTELVTPPKQEEEV) are disordered.

Part of the multisubunit axonemal dynein complex formed at least of two heavy chains and a number of intermediate and light chains.

The protein resides in the cytoplasm. Its function is as follows. May be involved in the regulation of cilia function. This is Dynein axonemal intermediate chain 3 (dnai3) from Danio rerio (Zebrafish).